The sequence spans 65 residues: Subtilisin inhibitor CLSI-I (65 aa).

The protein belongs to the protease inhibitor I13 (potato type I serine protease inhibitor) family.

Inhibits subtilisin-type microbial serine proteases including proteinase K, subtilisin BPN', subtilisin Carlsberg, subtilisin E, A.oryzae protease and S.griseus alkaline protease. Weakly inhibits pronase E. Does not inhibit trypsin or chymotrypsin. This chain is Subtilisin inhibitor CLSI-I, found in Canavalia lineata (Beach bean).